The sequence spans 790 residues: Lon protease (790 aa).

A Lon N-terminal domain is found at 13–209 (LPLFPIRNTV…RLTDHVAKEI (197 aa)). Residue 362–369 (GPPGVGKT) participates in ATP binding. In terms of domain architecture, Lon proteolytic spans 598 to 779 (DNQVGITIGL…DQVLDIALAT (182 aa)). Active-site residues include serine 685 and lysine 728.

Belongs to the peptidase S16 family. Homohexamer. Organized in a ring with a central cavity.

It localises to the cytoplasm. It carries out the reaction Hydrolysis of proteins in presence of ATP.. Its function is as follows. ATP-dependent serine protease that mediates the selective degradation of mutant and abnormal proteins as well as certain short-lived regulatory proteins. Required for cellular homeostasis and for survival from DNA damage and developmental changes induced by stress. Degrades polypeptides processively to yield small peptide fragments that are 5 to 10 amino acids long. Binds to DNA in a double-stranded, site-specific manner. This chain is Lon protease, found in Orientia tsutsugamushi (strain Ikeda) (Rickettsia tsutsugamushi).